Reading from the N-terminus, the 570-residue chain is Sulfite reductase [NADPH] hemoprotein beta-component (570 aa).

4 residues coordinate [4Fe-4S] cluster: C434, C440, C479, and C483. C483 is a siroheme binding site.

The protein belongs to the nitrite and sulfite reductase 4Fe-4S domain family. Alpha(8)-beta(8). The alpha component is a flavoprotein, the beta component is a hemoprotein. Requires siroheme as cofactor. [4Fe-4S] cluster serves as cofactor.

The enzyme catalyses hydrogen sulfide + 3 NADP(+) + 3 H2O = sulfite + 3 NADPH + 4 H(+). Its pathway is sulfur metabolism; hydrogen sulfide biosynthesis; hydrogen sulfide from sulfite (NADPH route): step 1/1. Component of the sulfite reductase complex that catalyzes the 6-electron reduction of sulfite to sulfide. This is one of several activities required for the biosynthesis of L-cysteine from sulfate. The chain is Sulfite reductase [NADPH] hemoprotein beta-component from Shigella sonnei (strain Ss046).